The chain runs to 288 residues: Probable endonuclease 4 (288 aa).

Residues His75, His115, Glu153, Asp187, His190, His224, Asp237, His239, and Glu269 each contribute to the Zn(2+) site.

It belongs to the AP endonuclease 2 family. Requires Zn(2+) as cofactor.

It carries out the reaction Endonucleolytic cleavage to 5'-phosphooligonucleotide end-products.. Functionally, endonuclease IV plays a role in DNA repair. It cleaves phosphodiester bonds at apurinic or apyrimidinic (AP) sites, generating a 3'-hydroxyl group and a 5'-terminal sugar phosphate. The polypeptide is Probable endonuclease 4 (Chlamydia muridarum (strain MoPn / Nigg)).